Consider the following 853-residue polypeptide: MSAIENFDAHTPMMQQYLRLKAQHPEILLFYRMGDFYELFYDDAKRASQLLDISLTKRGASAGEPIPMAGIPYHAVENYLAKLVNQGESVAICEQIGDPATSKGPVERKVVRIVTPGTISDEALLQERQDNLLAAIWQDSKGFGYATLDISSGRFRLSEPADRETMAAELQRTNPAELLYAEDFAEMSLIEGRRGLRRRPLWEFEIDTARQQLNLQFGTRDLVGFGVENAPRGLCAAGCLLQYAKDTQRTTLPHIRSITMEREQDSIIMDAATRRNLEITQNLAGGAENTLASVLDCTVTPMGSRMLKRWLHMPVRDTRVLLERQQTIGALQDFTAGLQPVLRQVGDLERILARLALRTARPRDLARMRHAFQQLPELRAQLETVDSAPVQALREKMGEFAELRDLLERAIIDTPPVLVRDGGVIASGYNEELDEWRALADGATDYLERLEVRERERTGLDTLKVGFNAVHGYYIQISRGQSHLAPINYMRRQTLKNAERYIIPELKEYEDKVLTSKGKALALEKQLYEELFDLLLPHLEALQQSASALAELDVLVNLAERAYTLNYTCPTFIDKPGIRITEGRHPVVEQVLNEPFIANPLNLSPQRRMLIITGPNMGGKSTYMRQTALIALMAYIGSYVPAQKVEIGPIDRIFTRVGAADDLASGRSTFMVEMTETANILHNATEYSLVLMDEIGRGTSTYDGLSLAWACAENLANKIKALTLFATHYFELTQLPEKMEGVANVHLDALEHGDTIAFMHSVQDGAASKSYGLAVAALAGVPKEVIKRARQKLRELESISPNAAATQVDGTQMSLLSVPEETSPAVEALENLDPDSLTPRQALEWIYRLKSLV.

Residue 614–621 participates in ATP binding; the sequence is GPNMGGKS.

The protein belongs to the DNA mismatch repair MutS family.

In terms of biological role, this protein is involved in the repair of mismatches in DNA. It is possible that it carries out the mismatch recognition step. This protein has a weak ATPase activity. The sequence is that of DNA mismatch repair protein MutS from Escherichia coli (strain K12 / MC4100 / BW2952).